A 794-amino-acid chain; its full sequence is MMAKAKALIPDNGRAGADEGNRQAWIGQEVLRREDRRLLTGTATFAGDLGVPGQLHMRIVRSTQAHARIVSIDATEAEKTPGVRMVITSEHTRHLGSVLLEELGYHEIYENIEDFSHPVLAVDKVLYVGQPVVAVLAVDPYLAEDAAELVSIEYEPLPVLLDPEEALTGKVELFPGRGNEGARIKKAYGDIDRAFAEAEHVIRHKYVTNRHSGVPMEPRAVVVQPDPARDTLFIWGTVHVHDNRRIIAKMLNLPEVNVRMKHVEIGGSFGVKGGVFPENVVAAWAARTLGVPIKWTEDRVEHMTSTSHAREMVHKLELALDAEGRILGMKDEIFHNHGAYFRQAEPLVSDITAGIVFGPYRVPAYDATLHAVFTNKTPVGAYRAPGRYESTFARERIFDLACAEIGLSKTEFRRRNLLTAEDLPWTPGLDIVHEPYHFDSGDVVKHFNEALEAANFSEWLEESKRLRADGRKVGVGLGVLMDKAGLGLFETGGVEVSRAGRVTVKTGGSSVGQGIETVLAQIVAEELQIAPENIDIVHSDTELIPDGVGSWSSRSTVLAGGAARKAALAVVEKARRLASEMLEADPDDLELTAGSFKVKGTDQQISLYEIAAARDPFTARADNDEPGLAADAVYMNNAMNYPYGVTLVQIELDPDTGGHRILRFSTSTEAGRVINPLTTRGQIIGAAVQGIGGALYEEFLYEEDGQPITTSFMDYLLPSAQEMPNVDCFVTEDAKSPDNPFGAKGLGEIGIIAAGAAIASAIDDAIADGVHTDRLPVTPEQIFSRCQGLNKAER.

Heterohexamer of 2 alpha (kdhA), 2 beta (kdhB) and 2 gamma (kdhC) subunit. Dimer of heterotrimers. The cofactor is Mo-molybdopterin cytosine dinucleotide.

The catalysed reaction is 6-hydroxypseudooxynicotine + A + H2O = 2,6-dihydroxypseudooxynicotine + AH2. It participates in alkaloid degradation; nicotine degradation. In terms of biological role, molybdo-flavoprotein enzyme complex involved in nicotine degradation. The subunit gamma (large subunit) contains the substrate-binding sites, the subunit alpha (medium subunit) binds FAD and the subunit beta (small subunit) has a 2Fe-2S ferredoxin-type domain which binds 2 2Fe-2S clusters. The protein is 6-hydroxypseudooxynicotine dehydrogenase complex subunit gamma (kdhC) of Paenarthrobacter nicotinovorans (Arthrobacter nicotinovorans).